Reading from the N-terminus, the 507-residue chain is ATP synthase subunit alpha, plastid (507 aa).

170-177 (GDRQTGKT) serves as a coordination point for ATP.

The protein belongs to the ATPase alpha/beta chains family. As to quaternary structure, F-type ATPases have 2 components, CF(1) - the catalytic core - and CF(0) - the membrane proton channel. CF(1) has five subunits: alpha(3), beta(3), gamma(1), delta(1), epsilon(1). CF(0) has four main subunits: a, b, b' and c.

Its subcellular location is the plastid membrane. The catalysed reaction is ATP + H2O + 4 H(+)(in) = ADP + phosphate + 5 H(+)(out). Functionally, produces ATP from ADP in the presence of a proton gradient across the membrane. The alpha chain is a regulatory subunit. This chain is ATP synthase subunit alpha, plastid, found in Cuscuta obtusiflora (Peruvian dodder).